Here is a 435-residue protein sequence, read N- to C-terminus: Cell adhesion molecule 2 (435 aa).

Positions 1–24 (MIWKRSAVLRFYSVCGLLLQGSQG) are cleaved as a signal peptide. At 25 to 367 (QFPLTQNVTV…SLAGQNGPDH (343 aa)) the chain is on the extracellular side. Positions 27–119 (PLTQNVTVVE…PVKTSKAYLT (93 aa)) constitute an Ig-like V-type domain. Asn31 and Asn51 each carry an N-linked (GlcNAc...) asparagine glycan. 3 disulfide bridges follow: Cys44/Cys104, Cys146/Cys203, and Cys248/Cys296. 2 consecutive Ig-like C2-type domains span residues 127–219 (PQIS…VAMQ) and 227–312 (PSVK…YVLI). Asn291 carries N-linked (GlcNAc...) asparagine glycosylation. The span at 337 to 351 (SVTITTSPSTSASSS) shows a compositional bias: low complexity. A disordered region spans residues 337 to 360 (SVTITTSPSTSASSSSRRDPNSLA). The chain crosses the membrane as a helical span at residues 368–388 (ALIGGIVAVVVFVTLCSIFLL). Topologically, residues 389 to 435 (GRYLARHKGTYLTNEAKGAEDAPDADTAIINAEGSQVNAEEKKEYFI) are cytoplasmic. Phosphoserine is present on Ser423.

This sequence belongs to the nectin family. Glycosylation at Asn-51 reduces adhesive binding.

It is found in the cell membrane. Its subcellular location is the synapse. It localises to the cell projection. The protein resides in the axon. Its function is as follows. Adhesion molecule that engages in homo- and heterophilic interactions with the other nectin-like family members, leading to cell aggregation. Important for synapse organization, providing regulated trans-synaptic adhesion. Preferentially binds to oligodendrocytes. The polypeptide is Cell adhesion molecule 2 (Cadm2) (Mus musculus (Mouse)).